The chain runs to 549 residues: MKNINPTQTSAWQALQKHFDEMKDVTISELFAKDSDRFSKFSATFDDLMLVDFSKNRITEETLAKLQDLAKETDLAGAIKSMFSGEKINRTEDRAVLHVALRNRSNTPIVVDGKDVMPEVNAVLEKMKTFSEAIISGSWKGYTGKPITDVVNIGIGGSDLGPFMVTEALRPYKNHLNMHFVSNVDGTHIAEVLKNVNPETTLFLVASKTFTTQETMTNAHSARDWFLATAGDDKHVAKHFAALSTNAKAVGEFGIDTANMFEFWDWVGGRYSLWSAIGLSIILSVGFDNFVELLSGAHAMDKHFSTTPAEKNLPVLLALIGIWYNNFFGAETEAILPYDQYMHRFAAYFQQGNMESNGKYVDRNGHAVDYQTGPIIWGEPGTNGQHAFYQLIHQGTKMVPCDFIAPAITHNPLSDHHQKLLSNFFAQTEALAFGKSREVVEQEYRDQGKDPATLEHVVPFKVFEGNRPTNSILLREITPFSLGALIALYEHKIFTQGAILNIFTFDQWGVELGKQLANRILPELKDGSEVSSHDSSTNGLINRYKAWRA.

The active-site Proton donor is the glutamate 355. Catalysis depends on residues histidine 386 and lysine 514.

This sequence belongs to the GPI family.

It localises to the cytoplasm. The catalysed reaction is alpha-D-glucose 6-phosphate = beta-D-fructose 6-phosphate. It participates in carbohydrate biosynthesis; gluconeogenesis. It functions in the pathway carbohydrate degradation; glycolysis; D-glyceraldehyde 3-phosphate and glycerone phosphate from D-glucose: step 2/4. Catalyzes the reversible isomerization of glucose-6-phosphate to fructose-6-phosphate. In Klebsiella pneumoniae subsp. pneumoniae (strain ATCC 700721 / MGH 78578), this protein is Glucose-6-phosphate isomerase.